The primary structure comprises 142 residues: Gonadotropin subunit beta-2 (142 aa).

Positions 1–24 (MLGLHVGTLMISLFLCILLEPVEG) are cleaved as a signal peptide. 6 disulfide bridges follow: C30-C78, C44-C93, C47-C131, C55-C109, C59-C111, and C114-C121. A glycan (N-linked (GlcNAc...) asparagine) is linked at N34.

The protein belongs to the glycoprotein hormones subunit beta family. In terms of assembly, heterodimer of an alpha and a beta chain.

It is found in the secreted. Its function is as follows. Involved in gametogenesis and steroidogenesis. This Coregonus autumnalis (Arctic cisco) protein is Gonadotropin subunit beta-2 (cgbb).